A 578-amino-acid polypeptide reads, in one-letter code: Penicillin-binding protein activator LpoA (578 aa).

A signal peptide spans 1-30; the sequence is MPTILVQSYGFRQKMKTIFIPTALALLLAA. A lipid anchor (N-palmitoyl cysteine) is attached at C31. Residue C31 is the site of S-diacylglycerol cysteine attachment.

The protein belongs to the LpoA family. As to quaternary structure, interacts with PBP1a.

The protein localises to the cell outer membrane. Regulator of peptidoglycan synthesis that is essential for the function of penicillin-binding protein 1A (PBP1a). This is Penicillin-binding protein activator LpoA from Glaesserella parasuis serovar 5 (strain SH0165) (Haemophilus parasuis).